Consider the following 352-residue polypeptide: Phosphatase Herzog (352 aa).

The tract at residues 1-102 (MDATSIITQV…PLPDQQRYLL (102 aa)) is prion-like domain necessary for both protein assembly and membrane targeting. Positions 103 to 267 (PQVRLTDMHR…ELIPLFEKLS (165 aa)) are mediates substrate recognition. The FCP1 homology domain occupies 108–266 (TDMHRKCMVI…RELIPLFEKL (159 aa)). Disordered stretches follow at residues 284–310 (NNQTNQQQHPQELQQAPNQLHQQLQQQ) and 332–352 (TMLNQQQTSPPSPQSELLQKT).

In terms of assembly, monomer. Forms higher-order protein aggregates with amyloid-like features during gastrulation. Interacts with babo, dah, Irk1, pch2, Ras64B, sax and Src64B.

The protein localises to the cell membrane. The catalysed reaction is O-phospho-L-seryl-[protein] + H2O = L-seryl-[protein] + phosphate. Its activity is regulated as follows. Phosphatase activity requires amyloid-like aggregation on the membrane. Prion-like membrane-associated phosphatase. Phosphatase activity depends on amyloid-like assembly at the membrane. Might have a role in establishment of segment polarity in embryos. The protein is Phosphatase Herzog of Drosophila melanogaster (Fruit fly).